A 496-amino-acid chain; its full sequence is Fibronectin type III and SPRY domain-containing protein 1 (496 aa).

Positions 4-99 (QREALRKIIT…ALESSEELLE (96 aa)) form a coiled coil. A COS domain is found at 105–162 (LQASDSEDFSQAAKEIKDGITMAPAFRLSLKAKVSDNMSHLMVDFAQERQMLQALKFL). Residues 164–268 (VPSAPTIDLA…EPVTLETPAF (105 aa)) form the Fibronectin type-III domain. Positions 290–477 (WDAMGGKVQD…VTTGLQVPSA (188 aa)) constitute a B30.2/SPRY domain. The tract at residues 301–336 (KAREKEGKGRTASPVNSPARGTPSPKRMSSGRGGRD) is disordered. Residues R310 and R320 each carry the omega-N-methylarginine modification.

In terms of assembly, oligomerization is required for binding to microtubules.

It is found in the cytoplasm. The protein localises to the cytoskeleton. It localises to the microtubule organizing center. Its subcellular location is the centrosome. The protein resides in the nucleus. It is found in the cleavage furrow. Its function is as follows. May be involved in microtubule organization and stabilization. The chain is Fibronectin type III and SPRY domain-containing protein 1 (Fsd1) from Mus musculus (Mouse).